We begin with the raw amino-acid sequence, 466 residues long: Cysteine--tRNA ligase (466 aa).

Cys29 contacts Zn(2+). Positions 31 to 41 (PTVYNYIHIGN) match the 'HIGH' region motif. Zn(2+) contacts are provided by Cys209, His234, and Glu238. Residues 266–270 (KMSKS) carry the 'KMSKS' region motif. Lys269 serves as a coordination point for ATP. Ser270 is subject to Phosphoserine.

This sequence belongs to the class-I aminoacyl-tRNA synthetase family. As to quaternary structure, monomer. The cofactor is Zn(2+).

Its subcellular location is the cytoplasm. The enzyme catalyses tRNA(Cys) + L-cysteine + ATP = L-cysteinyl-tRNA(Cys) + AMP + diphosphate. The polypeptide is Cysteine--tRNA ligase (Bacillus velezensis (strain DSM 23117 / BGSC 10A6 / LMG 26770 / FZB42) (Bacillus amyloliquefaciens subsp. plantarum)).